Consider the following 331-residue polypeptide: MRRLVNDGYEAVEEMLAGYVAAQGKYVDFAENDKRVIVSKQMSEEPRVRIIVGGGSGHEPLFLGYVGKDFADAAVVGNINTSPSPEPCYNAVKAVDSGKGCLYMYGNYAGDVMNFDMGAEMAADDGIRVETVLVTDDIYSAENVEDRRGVAGDLIVFKAAASAAAKGLDLDAVKQAAEKANANTFSMGVALSSSTLPVTGKAIFEMKEGEMEVGMGIHGEPGIKRTSIEPADKVVDQIMGYLIEEMKLTAGEEVHVLINGLGGLPVMDQYICYRRVDEILKEKGVHIHSPLVGNYATSMDMIGMSITLVRLDDELKDLLDTPCDTPYFKVD.

In terms of domain architecture, DhaK spans 7-328; it reads DGYEAVEEML…LDTPCDTPYF (322 aa). Dihydroxyacetone contacts are provided by residues 55–58 and aspartate 111; that span reads GSGH. The Proton acceptor role is filled by histidine 58. Residue histidine 218 is the Tele-hemiaminal-histidine intermediate of the active site.

As to quaternary structure, homodimer. The dihydroxyacetone kinase complex is composed of a homodimer of DhaM, a homodimer of DhaK and the subunit DhaL.

The protein localises to the cytoplasm. The enzyme catalyses dihydroxyacetone + phosphoenolpyruvate = dihydroxyacetone phosphate + pyruvate. It functions in the pathway polyol metabolism; glycerol degradation. Its function is as follows. Dihydroxyacetone binding subunit of the dihydroxyacetone kinase, which is responsible for the phosphoenolpyruvate (PEP)-dependent phosphorylation of dihydroxyacetone via a phosphoryl group transfer from DhaL-ATP. The polypeptide is PTS-dependent dihydroxyacetone kinase 2, dihydroxyacetone-binding subunit DhaK (Listeria innocua serovar 6a (strain ATCC BAA-680 / CLIP 11262)).